The chain runs to 419 residues: AT-hook motif nuclear-localized protein 4 (419 aa).

Disordered stretches follow at residues Met1–Gly168, Gln301–Ala337, and Asp382–Ser419. The Bipartite nuclear localization signal signature appears at Lys78–Lys86. The segment at residues Lys78–Asp90 is a DNA-binding region (a.T hook). Over residues Pro101 to Phe112 the composition is skewed to polar residues. A compositionally biased stretch (basic residues) spans Arg115 to Gly130. A compositionally biased stretch (low complexity) spans Gly136–Asn148. The region spanning Val174–Arg314 is the PPC domain. The span at Pro318 to Phe328 shows a compositional bias: polar residues. A compositionally biased stretch (acidic residues) spans Asp391 to Glu406.

As to quaternary structure, homodimer. Interacts with AHL3. Predominantly expressed in the stele of the root meristem with a specificity to the procambium.

It is found in the nucleus. In terms of biological role, transcription factor that specifically binds AT-rich DNA sequences related to the nuclear matrix attachment regions (MARs). Acts redundantly with AHL3 to regulate the formation of tissue boundary between the xylem and procambium in the root meristem. Cell-to-cell movement of AHL4 from the procambium to the xylem is critical for its function in root vascular patterning. The sequence is that of AT-hook motif nuclear-localized protein 4 from Arabidopsis thaliana (Mouse-ear cress).